The following is a 150-amino-acid chain: Arginine repressor (150 aa).

The protein belongs to the ArgR family.

The protein resides in the cytoplasm. The protein operates within amino-acid biosynthesis; L-arginine biosynthesis [regulation]. In terms of biological role, regulates arginine biosynthesis genes. The sequence is that of Arginine repressor from Clostridium botulinum (strain ATCC 19397 / Type A).